A 386-amino-acid chain; its full sequence is Succinate--CoA ligase [ADP-forming] subunit beta (386 aa).

Positions Lys9–Leu244 constitute an ATP-grasp domain. Residues Lys46, Gly53–Gly55, Val102, and Glu107 each bind ATP. 2 residues coordinate Mg(2+): Asn199 and Asp213. Substrate-binding positions include Asn264 and Gly321–Met323.

It belongs to the succinate/malate CoA ligase beta subunit family. In terms of assembly, heterotetramer of two alpha and two beta subunits. Mg(2+) serves as cofactor.

It carries out the reaction succinate + ATP + CoA = succinyl-CoA + ADP + phosphate. It catalyses the reaction GTP + succinate + CoA = succinyl-CoA + GDP + phosphate. The protein operates within carbohydrate metabolism; tricarboxylic acid cycle; succinate from succinyl-CoA (ligase route): step 1/1. Functionally, succinyl-CoA synthetase functions in the citric acid cycle (TCA), coupling the hydrolysis of succinyl-CoA to the synthesis of either ATP or GTP and thus represents the only step of substrate-level phosphorylation in the TCA. The beta subunit provides nucleotide specificity of the enzyme and binds the substrate succinate, while the binding sites for coenzyme A and phosphate are found in the alpha subunit. The protein is Succinate--CoA ligase [ADP-forming] subunit beta of Chlamydia trachomatis serovar A (strain ATCC VR-571B / DSM 19440 / HAR-13).